Reading from the N-terminus, the 329-residue chain is NADH-quinone oxidoreductase subunit H (329 aa).

The next 9 membrane-spanning stretches (helical) occupy residues 9–29 (LIKI…ATYI), 42–62 (GPCY…IKLF), 75–95 (FIFT…MAPI), 117–137 (IGFL…ILAG), 154–174 (IQLL…LMVV), 188–208 (GGFL…FLIA), 238–258 (LKWG…SFVI), 269–291 (WGFI…LSMW), and 309–329 (WKIM…IILI).

The protein belongs to the complex I subunit 1 family. As to quaternary structure, NDH-1 is composed of 14 different subunits. Subunits NuoA, H, J, K, L, M, N constitute the membrane sector of the complex.

The protein resides in the cell inner membrane. The catalysed reaction is a quinone + NADH + 5 H(+)(in) = a quinol + NAD(+) + 4 H(+)(out). Functionally, NDH-1 shuttles electrons from NADH, via FMN and iron-sulfur (Fe-S) centers, to quinones in the respiratory chain. The immediate electron acceptor for the enzyme in this species is believed to be ubiquinone. Couples the redox reaction to proton translocation (for every two electrons transferred, four hydrogen ions are translocated across the cytoplasmic membrane), and thus conserves the redox energy in a proton gradient. This subunit may bind ubiquinone. This Helicobacter pylori (strain ATCC 700392 / 26695) (Campylobacter pylori) protein is NADH-quinone oxidoreductase subunit H.